Reading from the N-terminus, the 370-residue chain is Psilocybin cluster transcription regulator (370 aa).

2 disordered regions span residues Met1–Ser39 and Tyr102–Arg221. The segment covering Ile143–Gly152 has biased composition (polar residues). The segment covering Thr183 to Ser202 has biased composition (low complexity). The segment covering Glu204 to Arg218 has biased composition (basic and acidic residues). The basic motif stretch occupies residues Gln208 to Arg221. The bHLH domain maps to Gln208–Leu258. A helix-loop-helix motif region spans residues Gly222–Leu258. A disordered region spans residues Val317–Glu370. Residues Glu359–Glu370 show a composition bias toward basic and acidic residues.

It localises to the nucleus. In terms of biological role, transcription factor that may regulate the expression of the gene cluster that mediates the biosynthesis of psilocybin, a psychotropic tryptamine-derived natural product. The protein is Psilocybin cluster transcription regulator of Psilocybe cyanescens.